We begin with the raw amino-acid sequence, 514 residues long: MDAASSSLALSNIKLHGSTNTLNSDQRISSLCSLPKSRVTFSCKTSGNLQVRDRSTGLVVSCSSSNGDRDVIQGLHLSGPIEKKSRLGQACCSVGTFTVGEFALESQSQAVDDKVGVLLLNLGGPETLDDVQPFLYNLFADPDIIRLPRLFRFLQEPLAKLISTYRAPKSKEGYASIGGGSPLRKITDEQAQALKMALAEKNMSTNVYVGMRYWYPFTEEAIQQIKRDGITRLVVLPLYPQYSISTTGSSIRVLQKMFREDAYLSSLPVSIIKSWYQREGYIKSMADLMQAELKNFANPQEVMIFFSAHGVPVSYVENAGDPYKDQMEECICLIMQELKARGIGNEHTLAYQSRVGPVQWLKPYTDEVLVELGQKGIKSLLAVPVSFVSEHIETLEEIDMEYKHLALESGIQNWGRVPALNCNSSFISDLADAVIEALPSATALAPHTSSTDADDHDPFLYAIKLLFGSVLAFILLLSPKAFMVFRNNFLLNYTRIYGYRGERSEFFWVRLIFT.

This sequence belongs to the ferrochelatase family.

The protein localises to the plastid. It is found in the chloroplast. The catalysed reaction is heme b + 2 H(+) = protoporphyrin IX + Fe(2+). The protein operates within porphyrin-containing compound metabolism; protoheme biosynthesis; protoheme from protoporphyrin-IX: step 1/1. Functionally, catalyzes the ferrous insertion into protoporphyrin IX. This is Ferrochelatase-2, chloroplastic (HEMH) from Cucumis sativus (Cucumber).